A 125-amino-acid chain; its full sequence is Cytochrome c-556 (125 aa).

Heme-binding residues include Met-13, Cys-113, Cys-116, and His-117. Heme c contacts are provided by Met-13, Cys-113, Cys-116, and His-117.

As to quaternary structure, monomer. Binds 1 heme c group covalently per subunit.

Its function is as follows. Low-spin monoheme cytochrome c. The protein is Cytochrome c-556 of Agrobacterium tumefaciens (strain apple 185).